We begin with the raw amino-acid sequence, 535 residues long: CTP synthase (535 aa).

Residues M1–L267 form an amidoligase domain region. A CTP-binding site is contributed by S13. S13 serves as a coordination point for UTP. S14–I19 provides a ligand contact to ATP. Position 54 (Y54) interacts with L-glutamine. D71 contacts ATP. Mg(2+) is bound by residues D71 and E141. CTP is bound by residues D148–E150, K188–Q193, and K224. Residues K188–Q193 and K224 each bind UTP. Residue R240–A242 coordinates ATP. Positions K292–S534 constitute a Glutamine amidotransferase type-1 domain. G354 contributes to the L-glutamine binding site. Residue C381 is the Nucleophile; for glutamine hydrolysis of the active site. L-glutamine-binding positions include L382 to Q385, E405, and R462. Residues H507 and E509 contribute to the active site.

This sequence belongs to the CTP synthase family. In terms of assembly, homotetramer.

It catalyses the reaction UTP + L-glutamine + ATP + H2O = CTP + L-glutamate + ADP + phosphate + 2 H(+). It carries out the reaction L-glutamine + H2O = L-glutamate + NH4(+). The enzyme catalyses UTP + NH4(+) + ATP = CTP + ADP + phosphate + 2 H(+). The protein operates within pyrimidine metabolism; CTP biosynthesis via de novo pathway; CTP from UDP: step 2/2. Its activity is regulated as follows. Allosterically activated by GTP, when glutamine is the substrate; GTP has no effect on the reaction when ammonia is the substrate. The allosteric effector GTP functions by stabilizing the protein conformation that binds the tetrahedral intermediate(s) formed during glutamine hydrolysis. Inhibited by the product CTP, via allosteric rather than competitive inhibition. Catalyzes the ATP-dependent amination of UTP to CTP with either L-glutamine or ammonia as the source of nitrogen. Regulates intracellular CTP levels through interactions with the four ribonucleotide triphosphates. The chain is CTP synthase from Bacillus thuringiensis subsp. konkukian (strain 97-27).